Reading from the N-terminus, the 484-residue chain is Transcription factor TGAL4 (484 aa).

A compositionally biased stretch (polar residues) spans 1–11 (MGEASSSSGHP). 3 disordered regions span residues 1-22 (MGEASSSSGHPRQNPHVLGYGF), 84-137 (ATAA…NASS), and 155-181 (QQEQHKKMATNSPTHSSKTGKALDPKT). A compositionally biased stretch (low complexity) spans 123–137 (SESSSKNNSNQNASS). A compositionally biased stretch (polar residues) spans 163–173 (ATNSPTHSSKT). A bZIP domain is found at 178–222 (DPKTMRRLAQNREAARKSRLRKKAYIQQLESSKLKLAQMEQDIHR). The tract at residues 180–200 (KTMRRLAQNREAARKSRLRKK) is basic motif. The interval 206-220 (LESSKLKLAQMEQDI) is leucine-zipper. Residues 241–455 (AAMFDVDYAR…RALSSLWASR (215 aa)) enclose the DOG1 domain.

It belongs to the bZIP family. Interacts with NPR1/NH1 and NPR3/NH3.

It is found in the nucleus. In terms of biological role, transcriptional regulator involved in defense response. This chain is Transcription factor TGAL4, found in Oryza sativa subsp. japonica (Rice).